A 152-amino-acid polypeptide reads, in one-letter code: UPF0756 membrane protein JDM1_1594 (152 aa).

Helical transmembrane passes span 25-45, 52-72, 85-105, and 115-135; these read ATVVVLLIKLIPNTSKLLTTI, WGVTVITVAILIPIATGQIGF, WIAVACGVLVSVLSFHGVGLL, and LVFGTIMGVVLLKGIAAGPII.

Belongs to the UPF0756 family.

The protein localises to the cell membrane. The sequence is that of UPF0756 membrane protein JDM1_1594 from Lactiplantibacillus plantarum (strain JDM1) (Lactobacillus plantarum).